Consider the following 452-residue polypeptide: MMITLRKLPLAVAVAAGVMSAQAMAVDFHGYARSGIGWTGSGGEQQCFQVTGAQSKYRLGNECETYAELKLGQEVWKEGDKSFYFDTNVAYSVNQQNDWESTDPAFREANVQGKNLIEWLPGSTIWAGKRFYQRHDVHMIDFYYWDISGPGAGIENIDLGFGKLSLAATRSTEAGGSYTFSSQNIYDEVKDTANDVFDVRLAGLQTNPDGVLELGVDYGRANTTDGYKLVDGASKDGWMFTAEHTQSMLKGYNKFVVQYATDAMTTQGKGQARGSDGSSSFTEELPDGTKINYANKVINNNGDMWRILDHGAISLGDKWGLMYVGMYQNIDWDNNLGTEWWTVGVRPMYKWTPIMSTLLEVGYDNVKSQQTGDRNNQYKITLAQQWQAGDSIWSRPAIRIFATYAKWDEKWGYIKDGDNISRYAAATNSGISTNSRGDSDEWTFGAQMEIWW.

The N-terminal stretch at 1–25 (MMITLRKLPLAVAVAAGVMSAQAMA) is a signal peptide.

It belongs to the porin LamB (TC 1.B.3) family. Homotrimer formed of three 18-stranded antiparallel beta-barrels, containing three independent channels.

It is found in the cell outer membrane. The catalysed reaction is beta-maltose(in) = beta-maltose(out). Its function is as follows. Involved in the transport of maltose and maltodextrins. This is Maltoporin from Salmonella paratyphi A (strain ATCC 9150 / SARB42).